The primary structure comprises 193 residues: MLKFLSKIGDYTKETIQSARYIGQGLAVTFDHMRRRPVTVQYPYEKLIPSERFRGRIHFEFDKCISCEVCVRVCPINLPVVDWEFNKELKKKQLKHYSIDFGVCIFCANCVEYCPTNCLSVTEEYELSVYDRHELNFDNVAMGRLPYKVTEDPMVTPIREFAYLPEGTLSGHDLPEPAKRAGQLPQDIVKTLK.

4Fe-4S ferredoxin-type domains follow at residues 55–84 and 95–124; these read GRIH…VDWE and KHYS…VTEE. [4Fe-4S] cluster is bound by residues C64, C67, C70, C74, C104, C107, C110, and C114.

The protein belongs to the complex I 23 kDa subunit family. As to quaternary structure, NDH-1 is composed of at least 11 different subunits. Requires [4Fe-4S] cluster as cofactor.

It is found in the cellular thylakoid membrane. It carries out the reaction a plastoquinone + NADH + (n+1) H(+)(in) = a plastoquinol + NAD(+) + n H(+)(out). It catalyses the reaction a plastoquinone + NADPH + (n+1) H(+)(in) = a plastoquinol + NADP(+) + n H(+)(out). Functionally, NDH-1 shuttles electrons from an unknown electron donor, via FMN and iron-sulfur (Fe-S) centers, to quinones in the respiratory and/or the photosynthetic chain. The immediate electron acceptor for the enzyme in this species is believed to be plastoquinone. Couples the redox reaction to proton translocation, and thus conserves the redox energy in a proton gradient. The chain is NAD(P)H-quinone oxidoreductase subunit I from Cyanothece sp. (strain PCC 7425 / ATCC 29141).